Reading from the N-terminus, the 809-residue chain is MSDPQEKSHIILKVWCFILGLALLITGAFYVIGGGKLISLGGSWYFLIAGLMITTSAFFMFKKKATGVWLYALAFIGTVIWALIDAGFEFWPLHSRLMFPAGLFAAVMLTLPSIRKYQYQTPMSAPAYVIGGLTVLGMLGGLYGMFIPHETVKASGEELPLVPVDPAKKQVNWDHYGNDAGGSRFVALDQINRNNVSKLKEAWRFRTGDFTTGTGNGAEDQMTPLQVGNKVFLCTPHNNIFAIDADSGKQLWKAEVNSTADAWERCRGVAYFDSTQPLVQPTLAGATPVAALAANTECPRRVYTNTVDGRLIAVNADTGARCKDFGVNGTVNLHEGLGENTKAPRFEVTSAPTIAGTTIVVGSRIADNVAADMPGGVIRAYDVITGKLRWAFDPRNPDPNYVLKPGEIYKRSSTNSWAAMSYDPQMNTVFLPMGSSSVDVWGGNRTAADHKYNTSVLALDATTGKEKWVYNTVHNDLWDFDLPMQPSLVDFPMKDGTTKPAVVIGTKSGQFYVLDRVTGKPLTKVIEQPIKVADIPGEQYSKTQPRSVEMPQIGNQTLKESDMWGATPFDQLMCRINFKSMRYDGLYTAPGTDVSLSFPGSLGGMNWGSIAFDPTHRYMFVNDMRLGLWIQLIKQTPEDIKIQANGGEKVNTGMGAVPMKGTPYKVNKNRFMSALGIPCQKPPFGTMTAIDMKTRQVAWQVPLGTIQDTGPMGIKMGLKAPIGMPTIGGPMATQGGLVFFAATQDYYLRAFNSSNGKELWKARLPVGSQGTPMSYMSPKTGKQYVVVSAGGARQSPDHGDYVIAYALEK.

5 helical membrane passes run 14–34, 41–61, 68–88, 90–110, and 127–147; these read VWCF…VIGG, GGSW…FFMF, VWLY…DAGF, FWPL…VMLT, and AYVI…GMFI.

The protein belongs to the bacterial PQQ dehydrogenase family. Pyrroloquinoline quinone is required as a cofactor.

The protein localises to the cell membrane. It carries out the reaction L-quinate + a quinone = 3-dehydroquinate + a quinol. It catalyses the reaction shikimate + a quinone = 3-dehydroshikimate + a quinol. The protein operates within aromatic compound metabolism; 3,4-dihydroxybenzoate biosynthesis; 3-dehydroquinate from D-quinate (PQQ route): step 1/1. Can act either on quinate or on shikimate. This chain is Quinate/shikimate dehydrogenase (quinone) (quiA), found in Acinetobacter baylyi (strain ATCC 33305 / BD413 / ADP1).